The chain runs to 181 residues: Protein AC41 (181 aa).

Its function is as follows. Plays a role in late gene expression. In Autographa californica nuclear polyhedrosis virus (AcMNPV), this protein is Protein AC41 (AC41).